A 465-amino-acid polypeptide reads, in one-letter code: Lactaldehyde dehydrogenase (465 aa).

An NAD(+)-binding site is contributed by 220 to 225; it reads GSVEVG. Catalysis depends on residues Glu-240 and Cys-274.

The protein belongs to the aldehyde dehydrogenase family. Homotetramer.

It catalyses the reaction (S)-lactaldehyde + NAD(+) + H2O = (S)-lactate + NADH + 2 H(+). Its pathway is cofactor biosynthesis; coenzyme F420 biosynthesis. In terms of biological role, involved in F420 biosynthesis through the oxidation of lactaldehyde to lactate. This is Lactaldehyde dehydrogenase from Methanococcus vannielii (strain ATCC 35089 / DSM 1224 / JCM 13029 / OCM 148 / SB).